We begin with the raw amino-acid sequence, 283 residues long: Diaminopimelate epimerase (283 aa).

2 residues coordinate substrate: asparagine 13 and asparagine 65. Residue cysteine 74 is the Proton donor of the active site. Residues 75–76, asparagine 196, and 214–215 contribute to the substrate site; these read GN and ER. The active-site Proton acceptor is the cysteine 223. 224–225 provides a ligand contact to substrate; it reads GT.

It belongs to the diaminopimelate epimerase family. As to quaternary structure, homodimer.

It is found in the cytoplasm. It carries out the reaction (2S,6S)-2,6-diaminopimelate = meso-2,6-diaminopimelate. It participates in amino-acid biosynthesis; L-lysine biosynthesis via DAP pathway; DL-2,6-diaminopimelate from LL-2,6-diaminopimelate: step 1/1. In terms of biological role, catalyzes the stereoinversion of LL-2,6-diaminopimelate (L,L-DAP) to meso-diaminopimelate (meso-DAP), a precursor of L-lysine and an essential component of the bacterial peptidoglycan. The protein is Diaminopimelate epimerase of Alkaliphilus metalliredigens (strain QYMF).